Consider the following 868-residue polypeptide: LPS-assembly protein LptD (868 aa).

The N-terminal stretch at 1–24 is a signal peptide; that stretch reads MLKGIHKYLLMCFGTVLFTVQANA.

This sequence belongs to the LptD family. As to quaternary structure, component of the lipopolysaccharide transport and assembly complex. Interacts with LptE and LptA.

It localises to the cell outer membrane. Its function is as follows. Together with LptE, is involved in the assembly of lipopolysaccharide (LPS) at the surface of the outer membrane. This chain is LPS-assembly protein LptD, found in Francisella tularensis subsp. novicida (strain U112).